The primary structure comprises 159 residues: MNIIQSGINVKNASITIIIARFNEFINKNLLSGAIDTLTRIGQIDKEKILTIYVPGTYEIPIVASYIANTNKYDAIIAIGTIIKGSTDHFKHIANDAYSNLSRISTKYFIPITMGILTTENIQQSIERSGTKMGNKGSEAALAALEMINIMKKLKKINN.

Residues F22, 57–59 (TYE), and 81–83 (TII) contribute to the 5-amino-6-(D-ribitylamino)uracil site. 86 to 87 (ST) lines the (2S)-2-hydroxy-3-oxobutyl phosphate pocket. H89 (proton donor) is an active-site residue. Residue M114 participates in 5-amino-6-(D-ribitylamino)uracil binding. R128 provides a ligand contact to (2S)-2-hydroxy-3-oxobutyl phosphate.

The protein belongs to the DMRL synthase family. In terms of assembly, forms an icosahedral capsid composed of 60 subunits, arranged as a dodecamer of pentamers.

The catalysed reaction is (2S)-2-hydroxy-3-oxobutyl phosphate + 5-amino-6-(D-ribitylamino)uracil = 6,7-dimethyl-8-(1-D-ribityl)lumazine + phosphate + 2 H2O + H(+). Its pathway is cofactor biosynthesis; riboflavin biosynthesis; riboflavin from 2-hydroxy-3-oxobutyl phosphate and 5-amino-6-(D-ribitylamino)uracil: step 1/2. Functionally, catalyzes the formation of 6,7-dimethyl-8-ribityllumazine by condensation of 5-amino-6-(D-ribitylamino)uracil with 3,4-dihydroxy-2-butanone 4-phosphate. This is the penultimate step in the biosynthesis of riboflavin. This chain is 6,7-dimethyl-8-ribityllumazine synthase, found in Buchnera aphidicola subsp. Schizaphis graminum (strain Sg).